A 289-amino-acid chain; its full sequence is Myoblast determination protein 1 homolog A (289 aa).

The bHLH domain occupies 95-146; that stretch reads DRRKAATMRERRRLSKVNEAFETLKRYTSTNPNQRLPKVEILRNAIRYIESL. The tract at residues 165-212 is disordered; it reads SGDSDASSPRSNCSDGMMDYNSPPCGSRRRNSYDSSFYSDSPNDSRLG. 2 stretches are compositionally biased toward polar residues: residues 168–178 and 197–208; these read SDASSPRSNCS and YDSSFYSDSPND.

Efficient DNA binding requires dimerization with another bHLH protein.

It localises to the nucleus. Functionally, may act as a transcriptional activator that promotes transcription of muscle-specific target genes and plays a role in muscle differentiation. In Xenopus laevis (African clawed frog), this protein is Myoblast determination protein 1 homolog A (myod1-a).